The chain runs to 850 residues: Transforming growth factor beta receptor type 3 (850 aa).

Residues 1–22 (MAVTSHHMVPVFVLMSACLATA) form the signal peptide. Residues 23–785 (GPEPSTRCEL…QIFHGLDTLT (763 aa)) lie on the Extracellular side of the membrane. An intrachain disulfide couples cysteine 54 to cysteine 199. N-linked (GlcNAc...) asparagine glycans are attached at residues asparagine 143 and asparagine 491. The 275-residue stretch at 454–728 (KCDNEKMVVA…PKCVTPDDAC (275 aa)) folds into the ZP domain. The disordered stretch occupies residues 528–557 (SPGDSSGWPDGYEDLESGDNGFPGDTDEGE). O-linked (Xyl...) (glycosaminoglycan) serine glycosylation is found at serine 533 and serine 544. Residues asparagine 570, asparagine 589, and asparagine 696 are each glycosylated (N-linked (GlcNAc...) asparagine). 3 cysteine pairs are disulfide-bonded: cysteine 638–cysteine 704, cysteine 659–cysteine 728, and cysteine 709–cysteine 721. The segment at 735 to 749 (MIWTMMQNKKTFTKP) is interaction with TGF-beta ligand. Residues 786 to 808 (VMGIAFAAFVIGALLTGALWYIY) form a helical membrane-spanning segment. Residues 809 to 850 (SHTGETARRQQVPTSPPASENSSAAHSIGSTQSTPCSSSSTA) lie on the Cytoplasmic side of the membrane. Residues 817–833 (RQQVPTSPPASENSSAA) show a composition bias toward polar residues. The disordered stretch occupies residues 817-850 (RQQVPTSPPASENSSAAHSIGSTQSTPCSSSSTA). The span at 835-850 (SIGSTQSTPCSSSSTA) shows a compositional bias: low complexity. Threonine 839 carries the post-translational modification Phosphothreonine.

In terms of assembly, forms homodimers and homooligomers. Interacts with DYNLT4. Interacts with integrin ITGA5:ITGB1; this interaction promotes the internalization and trafficking of ITGA5:ITGB1 into endocytic vesicles. Interacts with TGFB1, BMP2, BMP5, BMP7 or GDF5 and inhibin A via the ligand binding domains. Interacts with ALK3/BMPR1A; this interaction results in the cell surface retention of BMPR1A. Interacts with ALK6/BMPR1B; this interaction enhances BMPR1B-mediated stimulation of the BMP signaling pathway. Interacts with the scaffolding protein beta-arrestin2/ARRB2; this interaction mediates internalization of TGFBR3 and thus regulates migration, actin cytoskeleton and activation of CDC42. Post-translationally, extensively modified by glycosaminoglycan groups (GAG). Phosphorylated in the cytoplasmic domain by the type II receptor TGFBR2 at THR-839 to mediate recruitment of ARRB2 and subsequent internalization of TGFBR2 and TGFBR3.

The protein resides in the cell membrane. The protein localises to the secreted. Its subcellular location is the extracellular space. It is found in the extracellular matrix. Cell surface receptor that regulates diverse cellular processes including cell proliferation, differentiation, migration, and apoptosis. Initiates BMP, inhibin, and TGF-beta signaling pathways by interacting with different ligands including TGFB1, BMP2, BMP5, BMP7 or GDF5. Alternatively, acts as a cell surface coreceptor for BMP ligands, serving to enhance ligand binding by differentially regulating BMPR1A/ALK3 and BMPR1B/ALK6 receptor trafficking. Promotes epithelial cell adhesion, focal adhesion formation and integrin signaling during epithelial cell spreading on fibronectin. By interacting with the scaffolding protein beta-arrestin2/ARRB2, regulates migration or actin cytoskeleton and promotes the activation of CDC42 as well as the inhibition of NF-kappa-B. In gonadotrope cells, acts as an inhibin A coreceptor and regulates follicle-stimulating hormone (FSH) levels and female fertility. Plays a role in the inhibition of directed and random cell migration in epithelial cells by altering the actin cytoskeletal organization. Participates in epithelial-mesenchymal transformation (EMT) upon binding to BMP2 or TGFB2, by activating the PAR6/SMURF1/RHOA pathway. This Mus musculus (Mouse) protein is Transforming growth factor beta receptor type 3 (Tgfbr3).